A 126-amino-acid chain; its full sequence is Hydrogenase maturation factor HypA (126 aa).

Residue H2 coordinates Ni(2+). Zn(2+) is bound by residues C78, C81, C97, and C100.

Belongs to the HypA/HybF family.

Its function is as follows. Involved in the maturation of [NiFe] hydrogenases. Required for nickel insertion into the metal center of the hydrogenase. The chain is Hydrogenase maturation factor HypA from Methanococcus maripaludis (strain C7 / ATCC BAA-1331).